A 418-amino-acid polypeptide reads, in one-letter code: MTIIALGINHKTAPVELREKVAFSPEQISEALQQLSGHAHFNEAVIVSTCNRTEVYCSLAQQNSQTLLQWLSSFHGLDEHELSKNIYCHEGSDAINHLMRVACGLDSLVLGEPQILGQIKQAYNSAKTHNAVGVTFDRLFQKTFSVAKQVRTETNIGASAVSVAYAAVNLAKHIYGKLDKTNVLLIGAGETIELVAKHLYQNEPQNITVANRTLERARSLADQVSGDVIALAQLPERLHKADIVISSTASTLPIIGKGVVEQALKQRRYKPMLFIDIAVPRDIESQVGELDDAYLYSVDDLQTIVSENMSAREEAAEQAEVIITERTKEFLMWIRSLDSVDLIRHYRNDVQTIKSELVERAVSQLNTGKDAEKVILELANKLTNRLMHAPTRAIQDAAKKGEVAQLNQLKKMLGIDQE.

Residues 49 to 52 (TCNR), serine 107, 112 to 114 (EPQ), and glutamine 118 each bind substrate. Cysteine 50 functions as the Nucleophile in the catalytic mechanism. 187 to 192 (GAGETI) provides a ligand contact to NADP(+).

Belongs to the glutamyl-tRNA reductase family. In terms of assembly, homodimer.

The catalysed reaction is (S)-4-amino-5-oxopentanoate + tRNA(Glu) + NADP(+) = L-glutamyl-tRNA(Glu) + NADPH + H(+). It participates in porphyrin-containing compound metabolism; protoporphyrin-IX biosynthesis; 5-aminolevulinate from L-glutamyl-tRNA(Glu): step 1/2. In terms of biological role, catalyzes the NADPH-dependent reduction of glutamyl-tRNA(Glu) to glutamate 1-semialdehyde (GSA). The sequence is that of Glutamyl-tRNA reductase from Pseudoalteromonas translucida (strain TAC 125).